Consider the following 86-residue polypeptide: Sodium channel neurotoxin MeuNaTxalpha-4 (86 aa).

Residues M1–S19 form the signal peptide. The LCN-type CS-alpha/beta domain occupies R21–H85. Intrachain disulfides connect C31-C84, C35-C57, C43-C67, and C47-C69. A propeptide (removed by a carboxypeptidase) is located at residue R86.

Belongs to the long (4 C-C) scorpion toxin superfamily. Sodium channel inhibitor family. Alpha subfamily. In terms of tissue distribution, expressed by the venom gland.

It is found in the secreted. Functionally, alpha toxins bind voltage-independently at site-3 of sodium channels (Nav) and inhibit the inactivation of the activated channels, thereby blocking neuronal transmission. This toxin inhibits inactivation of drosophila DmNav1 (EC(50)=130 nM). This is Sodium channel neurotoxin MeuNaTxalpha-4 from Mesobuthus eupeus (Lesser Asian scorpion).